Reading from the N-terminus, the 281-residue chain is Phosphatidylglycerol--prolipoprotein diacylglyceryl transferase (281 aa).

4 consecutive transmembrane segments (helical) span residues 23 to 43 (VGPL…MFAW), 71 to 91 (FVIW…VLFY), 107 to 127 (WDGG…MILF), and 133 to 153 (IKVW…LGVV). A 1,2-diacyl-sn-glycero-3-phospho-(1'-sn-glycerol) is bound at residue arginine 154. The next 3 helical transmembrane spans lie at 189–209 (LYEA…LVWV), 217–237 (GFIA…VEFF), and 247–267 (LFGG…LIGL).

The protein belongs to the Lgt family.

It localises to the cell inner membrane. The catalysed reaction is L-cysteinyl-[prolipoprotein] + a 1,2-diacyl-sn-glycero-3-phospho-(1'-sn-glycerol) = an S-1,2-diacyl-sn-glyceryl-L-cysteinyl-[prolipoprotein] + sn-glycerol 1-phosphate + H(+). Its pathway is protein modification; lipoprotein biosynthesis (diacylglyceryl transfer). Functionally, catalyzes the transfer of the diacylglyceryl group from phosphatidylglycerol to the sulfhydryl group of the N-terminal cysteine of a prolipoprotein, the first step in the formation of mature lipoproteins. In Brucella anthropi (strain ATCC 49188 / DSM 6882 / CCUG 24695 / JCM 21032 / LMG 3331 / NBRC 15819 / NCTC 12168 / Alc 37) (Ochrobactrum anthropi), this protein is Phosphatidylglycerol--prolipoprotein diacylglyceryl transferase.